The following is a 201-amino-acid chain: Small ribosomal subunit protein uS4c (201 aa).

Positions Leu-15 to Gln-43 are disordered. One can recognise an S4 RNA-binding domain in the interval Met-89–Leu-152.

It belongs to the universal ribosomal protein uS4 family. Part of the 30S ribosomal subunit. Contacts protein S5. The interaction surface between S4 and S5 is involved in control of translational fidelity.

It is found in the plastid. The protein resides in the chloroplast. Its function is as follows. One of the primary rRNA binding proteins, it binds directly to 16S rRNA where it nucleates assembly of the body of the 30S subunit. Functionally, with S5 and S12 plays an important role in translational accuracy. This Panax ginseng (Korean ginseng) protein is Small ribosomal subunit protein uS4c (rps4).